We begin with the raw amino-acid sequence, 842 residues long: MEMAVANHRERSSDSMNRHLDSSGKYVRYTAEQVEALERVYAECPKPSSLRRQQLIRECSILANIEPKQIKVWFQNRRCRDKQRKEASRLQSVNRKLSAMNKLLMEENDRLQKQVSQLVCENGYMKQQLTTVVNDPSCESVVTTPQHSLRDANSPAGLLSIAEETLAEFLSKATGTAVDWVQMPGMKPGPDSVGIFAISQRCNGVAARACGLVSLEPMKIAEILKDRPSWFRDCRSLEVFTMFPAGNGGTIELVYMQTYAPTTLAPARDFWTLRYTTSLDNGSFVVCERSLSGSGAGPNAASASQFVRAEMLSSGYLIRPCDGGGSIIHIVDHLNLEAWSVPDVLRPLYESSKVVAQKMTISALRYIRQLAQESNGEVVYGLGRQPAVLRTFSQRLSRGFNDAVNGFGDDGWSTMHCDGAEDIIVAINSTKHLNNISNSLSFLGGVLCAKASMLLQNVPPAVLIRFLREHRSEWADFNVDAYSAATLKAGSFAYPGMRPTRFTGSQIIMPLGHTIEHEEMLEVVRLEGHSLAQEDAFMSRDVHLLQICTGIDENAVGACSELIFAPINEMFPDDAPLVPSGFRVIPVDAKTGDVQDLLTANHRTLDLTSSLEVGPSPENASGNSFSSSSSRCILTIAFQFPFENNLQENVAGMACQYVRSVISSVQRVAMAISPSGISPSLGSKLSPGSPEAVTLAQWISQSYSHHLGSELLTIDSLGSDDSVLKLLWDHQDAILCCSLKPQPVFMFANQAGLDMLETTLVALQDITLEKIFDESGRKAICSDFAKLMQQGFACLPSGICVSTMGRHVSYEQAVAWKVFAASEENNNNLHCLAFSFVNWSFV.

Positions 1-20 (MEMAVANHRERSSDSMNRHL) are disordered. A compositionally biased stretch (basic and acidic residues) spans 7–20 (NHRERSSDSMNRHL). The segment at residues 22–85 (SSGKYVRYTA…NRRCRDKQRK (64 aa)) is a DNA-binding region (homeobox). Residues 90–121 (LQSVNRKLSAMNKLLMEENDRLQKQVSQLVCE) adopt a coiled-coil conformation. An START domain is found at 151–379 (DANSPAGLLS…LAQESNGEVV (229 aa)).

Belongs to the HD-ZIP homeobox family. Class III subfamily. As to quaternary structure, homodimer. Heterodimer with ZPR1, ZPR2, ZPR3 or ZPR4. Interacts with ESR1 and ESR2. Interacts with ZPR1, ZPR2, ZPR3 and ZPR4. Heterodimerization with ZPR3 prevents DNA binding by REV. Expressed in the interfascicular regions of stem and vascular bundles of young roots and leaves.

Its subcellular location is the nucleus. Functionally, probable transcription factor involved in the regulation of interfascicular fiber (cortical cells) and secondary xylem differentiation in the inflorescence stems. Required for lateral shoot meristems (LSMs) and flower meristems (FMs) initiation. May be involved in the determination of vascular patterning and organ polarity. Directly regulates the expression of AGO10, ZPR1, ZPR2, ZPR3 and ZPR4. Required to regulate adaxial-abaxial polarity and leaf axial patterning. This chain is Homeobox-leucine zipper protein REVOLUTA, found in Arabidopsis thaliana (Mouse-ear cress).